Here is a 90-residue protein sequence, read N- to C-terminus: Acylphosphatase (90 aa).

The Acylphosphatase-like domain occupies 3–89; it reads ALKIRVEGIV…EGYEDFTIKY (87 aa). Catalysis depends on residues Arg-18 and Asn-36.

It belongs to the acylphosphatase family.

The catalysed reaction is an acyl phosphate + H2O = a carboxylate + phosphate + H(+). The chain is Acylphosphatase (acyP) from Thermotoga maritima (strain ATCC 43589 / DSM 3109 / JCM 10099 / NBRC 100826 / MSB8).